Reading from the N-terminus, the 185-residue chain is PXMP2/4 family protein 4 (185 aa).

The next 3 helical transmembrane spans lie at Met63–Asp83, Ile100–Leu120, and Val141–Ile161.

The protein belongs to the peroxisomal membrane protein PXMP2/4 family.

It is found in the membrane. The sequence is that of PXMP2/4 family protein 4 from Dictyostelium discoideum (Social amoeba).